The chain runs to 1029 residues: 2-oxoglutarate dehydrogenase, mitochondrial (1029 aa).

Positions 317, 415, 448, 450, and 676 each coordinate thiamine diphosphate. Positions 415, 448, and 450 each coordinate Mg(2+).

It belongs to the alpha-ketoglutarate dehydrogenase family. In terms of assembly, homodimer. Component of the 2-oxoglutarate dehydrogenase complex. Thiamine diphosphate serves as cofactor. It depends on Mg(2+) as a cofactor.

Its subcellular location is the mitochondrion matrix. It catalyses the reaction N(6)-[(R)-lipoyl]-L-lysyl-[protein] + 2-oxoglutarate + H(+) = N(6)-[(R)-S(8)-succinyldihydrolipoyl]-L-lysyl-[protein] + CO2. The 2-oxoglutarate dehydrogenase complex catalyzes the overall conversion of 2-oxoglutarate to succinyl-CoA and CO(2). It contains multiple copies of three enzymatic components: 2-oxoglutarate dehydrogenase (E1), dihydrolipoamide succinyltransferase (E2) and lipoamide dehydrogenase (E3). The chain is 2-oxoglutarate dehydrogenase, mitochondrial (ogdh-1) from Caenorhabditis elegans.